We begin with the raw amino-acid sequence, 72 residues long: MKIKILKFLKRKKWWEILVYILVVGFGFALFIGSIYDKWDKLIKWERYFILIYVSCKFVFLIWISLMYFIYN.

Helical transmembrane passes span 15-35 (WEILVYILVVGFGFALFIGSI) and 50-70 (ILIYVSCKFVFLIWISLMYFI).

The protein resides in the host membrane. This is an uncharacterized protein from Spiroplasma melliferum (SpV1).